Reading from the N-terminus, the 344-residue chain is tRNA N6-adenosine threonylcarbamoyltransferase (344 aa).

Residues histidine 110 and histidine 114 each contribute to the Fe cation site. Substrate-binding positions include 133–137 (AVSGA), aspartate 166, glycine 179, and asparagine 278. Residue aspartate 303 coordinates Fe cation.

This sequence belongs to the KAE1 / TsaD family. Fe(2+) is required as a cofactor.

Its subcellular location is the cytoplasm. It catalyses the reaction L-threonylcarbamoyladenylate + adenosine(37) in tRNA = N(6)-L-threonylcarbamoyladenosine(37) in tRNA + AMP + H(+). Its function is as follows. Required for the formation of a threonylcarbamoyl group on adenosine at position 37 (t(6)A37) in tRNAs that read codons beginning with adenine. Is involved in the transfer of the threonylcarbamoyl moiety of threonylcarbamoyl-AMP (TC-AMP) to the N6 group of A37, together with TsaE and TsaB. TsaD likely plays a direct catalytic role in this reaction. The protein is tRNA N6-adenosine threonylcarbamoyltransferase of Chlamydia caviae (strain ATCC VR-813 / DSM 19441 / 03DC25 / GPIC) (Chlamydophila caviae).